We begin with the raw amino-acid sequence, 34 residues long: Photosystem II reaction center protein M (34 aa).

Residues 5 to 25 (ILAFIATALFILIPTSFLLII) traverse the membrane as a helical segment.

This sequence belongs to the PsbM family. In terms of assembly, PSII is composed of 1 copy each of membrane proteins PsbA, PsbB, PsbC, PsbD, PsbE, PsbF, PsbH, PsbI, PsbJ, PsbK, PsbL, PsbM, PsbT, PsbX, PsbY, PsbZ, Psb30/Ycf12, at least 3 peripheral proteins of the oxygen-evolving complex and a large number of cofactors. It forms dimeric complexes. Detected in both etioplasts and green leaves; PSII is only assembled in green leaves.

The protein localises to the plastid. It localises to the chloroplast thylakoid membrane. Functionally, one of the components of the core complex of photosystem II (PSII). PSII is a light-driven water:plastoquinone oxidoreductase that uses light energy to abstract electrons from H(2)O, generating O(2) and a proton gradient subsequently used for ATP formation. It consists of a core antenna complex that captures photons, and an electron transfer chain that converts photonic excitation into a charge separation. This subunit is found at the monomer-monomer interface. The chain is Photosystem II reaction center protein M from Hordeum vulgare (Barley).